The sequence spans 92 residues: Small ribosomal subunit protein uS19 (92 aa).

It belongs to the universal ribosomal protein uS19 family.

In terms of biological role, protein S19 forms a complex with S13 that binds strongly to the 16S ribosomal RNA. The polypeptide is Small ribosomal subunit protein uS19 (Nitrobacter hamburgensis (strain DSM 10229 / NCIMB 13809 / X14)).